The primary structure comprises 382 residues: MESGSNSTSCPMAFAGDNSDGPMCPMMMMMPPIMTSHQHHGHDHQHQQQEHDGYAYQSHHQQSSSLFLQSLAPPQGTKNKVASSSSPSSCAPAYSLMEIHHNEIVAGGINPCSSSSSSASVKAKIMAHPHYHRLLAAYVNCQKVGAPPEVVARLEEACSSAAAAAASMGPTGCLGEDPGLDQFMEAYCEMLVKYEQELSKPFKEAMVFLQRVECQFKSLSLSSPSSFSGYGETAIDRNNNGSSEEEVDMNNEFVDPQAEDRELKGQLLRKYSGYLGSLKQEFMKKRKKGKLPKEARQQLLDWWSRHYKWPYPSEQQKLALAESTGLDQKQINNWFINQRKRHWKPSEDMQFVVMDATHPHHYFMDNVLGNPFPMDHISSTML.

The segment at 26-59 is disordered; that stretch reads MMMMMPPIMTSHQHHGHDHQHQQQEHDGYAYQSH. Residues 44-53 show a composition bias toward basic and acidic residues; sequence HQHQQQEHDG. Residues 262-282 enclose the ELK domain; the sequence is ELKGQLLRKYSGYLGSLKQEF. The homeobox; TALE-type DNA-binding region spans 283–346; it reads MKKRKKGKLP…NQRKRHWKPS (64 aa).

This sequence belongs to the TALE/KNOX homeobox family. Forms homodimers. May form heterodimeric complexes with TALE/BELL proteins BEL1, BLH2, BLH3, BLH8/PNF, BLH9/PNY and ATH1. Interacts with CCT8. Binds to MBP2C; this interaction reduces RNA binding capacity. Interacts with FTIP3 and FTIP4. As to expression, expressed in all four types of shoot apical meristems (SAM) i.e. in vegetative, axillary, inflorescence and floral.

Its subcellular location is the nucleus. It localises to the cell junction. The protein resides in the plasmodesma. The protein localises to the cytoplasm. It is found in the endosome. Its subcellular location is the cell membrane. In terms of biological role, required for shoot apical meristem (SAM) formation during embryogenesis. Negatively regulates ASYMMETRIC LEAVES1 (AS1) and ASYMMETRIC LEAVES2 (AS2 or LBD6). Probably binds to the DNA sequence 5'-TGAC-3'. Binds to RNA. The sequence is that of Homeobox protein SHOOT MERISTEMLESS from Arabidopsis thaliana (Mouse-ear cress).